Here is an 82-residue protein sequence, read N- to C-terminus: CLAVATA3/ESR (CLE)-related protein 53 (82 aa).

An N-terminal signal peptide occupies residues 1–26; sequence MATSTNSREFLIFICVLTLLVVRSEA. Hydroxyproline occurs at positions 74 and 77. Residue Pro77 is glycosylated (O-linked (Ara...) hydroxyproline).

Belongs to the CLV3/ESR signal peptide family. Post-translationally, the O-glycosylation (arabinosylation) of the hydroxyproline Pro-77 enhances binding affinity of the CLE53p peptide for its receptor. As to expression, expressed in root vasculature.

The protein resides in the secreted. The protein localises to the extracellular space. Functionally, signaling peptide involved in the regulation of root colonization by arbuscular mycorrhizal (AM) fungi. Moves from root to shoot to function with the receptor kinase SUNN, in a signaling pathway that repress strigolactone biosynthetic genes and strigolactone content in the roots, and consequently reduces the promotion of further colonization by AM fungi. In Medicago truncatula (Barrel medic), this protein is CLAVATA3/ESR (CLE)-related protein 53.